Here is an 80-residue protein sequence, read N- to C-terminus: FXYD domain-containing ion transport regulator 7 (80 aa).

At 1-22 (MATPTQSPTNVPEETDPFFYDY) the chain is on the extracellular side. O-linked (GlcNAc) threonine glycans are attached at residues Thr-3, Thr-5, and Thr-9. A helical transmembrane segment spans residues 23–45 (ATVQTVGMTLATIMFVLGIIIII). Topologically, residues 46 to 80 (SKKVKCRKADSRSESPTCKSCKSELPSSAPGGGGV) are cytoplasmic. A disordered region spans residues 56 to 80 (SRSESPTCKSCKSELPSSAPGGGGV). Residue Ser-73 is modified to Phosphoserine.

Belongs to the FXYD family. Regulatory subunit of the sodium/potassium-transporting ATPase which is composed of a catalytic alpha subunit, a non-catalytic beta subunit and an additional regulatory subunit. The regulatory subunit, a member of the FXYD protein family, modulates the enzymatic activity in a tissue- and isoform-specific way by changing affinities of the Na+/K+-ATPase toward Na(+), K(+) or ATP. Post-translationally, O-glycosylated; required for stabilization and translocation to the plasma membrane. As to expression, expressed specifically in brain. Expressed in both neurons and glia.

The protein resides in the cell membrane. Functionally, associates with and regulates the activity of the sodium/potassium-transporting ATPase (NKA) which catalyzes the hydrolysis of ATP coupled with the exchange of Na(+) and K(+) ions across the plasma membrane. Reduces the apparent affinity for external K(+), an effect that depends on the presence of external Na(+) and voltage. Increases the apparent affinity for intracellular Na(+). In Rattus norvegicus (Rat), this protein is FXYD domain-containing ion transport regulator 7 (Fxyd7).